The primary structure comprises 240 residues: Probable transcriptional regulatory protein VFMJ11_A0186 (240 aa).

Belongs to the TACO1 family.

It localises to the cytoplasm. This is Probable transcriptional regulatory protein VFMJ11_A0186 from Aliivibrio fischeri (strain MJ11) (Vibrio fischeri).